The chain runs to 258 residues: Imidazole glycerol phosphate synthase subunit HisF (258 aa).

Residues D11 and D130 contribute to the active site.

Belongs to the HisA/HisF family. In terms of assembly, heterodimer of HisH and HisF.

It is found in the cytoplasm. The enzyme catalyses 5-[(5-phospho-1-deoxy-D-ribulos-1-ylimino)methylamino]-1-(5-phospho-beta-D-ribosyl)imidazole-4-carboxamide + L-glutamine = D-erythro-1-(imidazol-4-yl)glycerol 3-phosphate + 5-amino-1-(5-phospho-beta-D-ribosyl)imidazole-4-carboxamide + L-glutamate + H(+). It functions in the pathway amino-acid biosynthesis; L-histidine biosynthesis; L-histidine from 5-phospho-alpha-D-ribose 1-diphosphate: step 5/9. IGPS catalyzes the conversion of PRFAR and glutamine to IGP, AICAR and glutamate. The HisF subunit catalyzes the cyclization activity that produces IGP and AICAR from PRFAR using the ammonia provided by the HisH subunit. The protein is Imidazole glycerol phosphate synthase subunit HisF of Yersinia pestis (strain Pestoides F).